Reading from the N-terminus, the 398-residue chain is 4-hydroxy-3-methylbut-2-en-1-yl diphosphate synthase (ferredoxin) (398 aa).

[4Fe-4S] cluster contacts are provided by Cys306, Cys309, Cys340, and Glu347.

Belongs to the IspG family. [4Fe-4S] cluster is required as a cofactor.

The enzyme catalyses (2E)-4-hydroxy-3-methylbut-2-enyl diphosphate + 2 oxidized [2Fe-2S]-[ferredoxin] + H2O = 2-C-methyl-D-erythritol 2,4-cyclic diphosphate + 2 reduced [2Fe-2S]-[ferredoxin] + H(+). It participates in isoprenoid biosynthesis; isopentenyl diphosphate biosynthesis via DXP pathway; isopentenyl diphosphate from 1-deoxy-D-xylulose 5-phosphate: step 5/6. In terms of biological role, converts 2C-methyl-D-erythritol 2,4-cyclodiphosphate (ME-2,4cPP) into 1-hydroxy-2-methyl-2-(E)-butenyl 4-diphosphate. The protein is 4-hydroxy-3-methylbut-2-en-1-yl diphosphate synthase (ferredoxin) of Synechococcus sp. (strain CC9605).